We begin with the raw amino-acid sequence, 86 residues long: MLNRCISRNTRLPVNLRIASRFYSDGPLGGAGPGNPQDIFIKRERAKEDYYARQQEREQLAHVKEQLKEHKKKLENLENKINNLSK.

Residues 1–23 (MLNRCISRNTRLPVNLRIASRFY) constitute a mitochondrion transit peptide. Residue Ser-24 is modified to Phosphoserine.

Belongs to the ATPase inhibitor family. As to quaternary structure, monomer and homodimer. Monomeric at pH 5.0 and dimeric at either pH 6.5 or 8.0. The protein aggregates increasingly strongly with increasing pH.

It is found in the mitochondrion. Its function is as follows. Endogenous low-affinity ATPase inhibitor, which inhibits specifically the reverse ATPase reaction of mitochondrial F(1)F(0)-type ATP synthase. Found to stabilize, together with STF2, a complex of intrinsic ATPase inhibitor INH1 and proton-translocating ATPase in mitochondrial membranes. Binds directly to purified F1-ATPase. The polypeptide is F(1)-ATPase inhibitor STF1, mitochondrial (STF1) (Saccharomyces cerevisiae (strain ATCC 204508 / S288c) (Baker's yeast)).